Here is a 1118-residue protein sequence, read N- to C-terminus: Sodium-driven chloride bicarbonate exchanger (1118 aa).

Disordered regions lie at residues 1–23 (MEIK…EEAV) and 58–97 (GRKS…TPSQ). Residues 1–509 (MEIKDQGAQM…DFRDAFSLQC (509 aa)) are Cytoplasmic-facing. Basic residues predominate over residues 59–76 (RKSHRRHRHRGHKHRKRD). A compositionally biased stretch (basic and acidic residues) spans 77–90 (RERDSGLEDGRESP). Position 89 is a phosphoserine (Ser-89). At Thr-94 the chain carries Phosphothreonine. His-221 and His-223 together coordinate Zn(2+). Disordered regions lie at residues 269–310 (AENK…KGPP) and 457–476 (NGTA…GPEL). Residue Ser-276 is modified to Phosphoserine. A helical transmembrane segment spans residues 510 to 530 (LASFLFLYCACMSPVITFGGL). Residues 531–538 (LGEATEGR) lie on the Extracellular side of the membrane. Residues 539 to 559 (ISAIESLFGASMTGIAYSLFG) form a helical membrane-spanning segment. The Cytoplasmic segment spans residues 560–562 (GQP). The chain crosses the membrane as a helical span at residues 563–583 (LTILGSTGPVLVFEKILFKFC). Over 584 to 596 (KEYGLSYLSLRAS) the chain is Extracellular. A helical membrane pass occupies residues 597-617 (IGLWTATLCIILVATDASSLV). The Cytoplasmic portion of the chain corresponds to 618-626 (CYITRFTEE). A helical membrane pass occupies residues 627–647 (AFASLICIIFIYEALEKLFEL). Topologically, residues 648–720 (SETYPINMHN…VGRACGHGHP (73 aa)) are extracellular. Asn-677, Asn-687, and Asn-697 each carry an N-linked (GlcNAc...) asparagine glycan. A helical transmembrane segment spans residues 721 to 741 (YVPDVLFWSVILFFSTVTMSA). Over 742–762 (TLKQFKTSRYFPTKVRSIVSD) the chain is Cytoplasmic. Residues 763–783 (FAVFLTILCMVLIDYAIGIPS) traverse the membrane as a helical segment. Residues 784–809 (PKLQVPSVFKPTRDDRGWFVTPLGPN) are Extracellular-facing. Residues 810 to 830 (PWWTIIAAIIPALLCTILIFM) form a helical membrane-spanning segment. The Cytoplasmic segment spans residues 831–855 (DQQITAVIINRKEHKLKKGCGYHLD). A helical membrane pass occupies residues 856 to 876 (LLMVAVMLGVCSIMGLPWFVA). Residues 877–912 (ATVLSITHVNSLKLESECSAPGEQPKFLGIREQRVT) are Extracellular-facing. Residues 913–933 (GLMIFILMGSSVFMTSILKFI) form a helical membrane-spanning segment. The Cytoplasmic portion of the chain corresponds to 934 to 935 (PM). The helical transmembrane segment at 936–956 (PVLYGVFLYMGASSLKGIQLF) threads the bilayer. The Extracellular portion of the chain corresponds to 957 to 998 (DRIKLFWMPAKHQPDFIYLRHVPLRKVHLFTVIQMSCLGLLW). A helical transmembrane segment spans residues 999–1019 (IIKVSRAAIVFPMMVLALVFV). The Cytoplasmic segment spans residues 1020-1118 (RKLMDFLFTK…SRFPSKSSPS (99 aa)). Phosphoserine occurs at positions 1057 and 1085.

This sequence belongs to the anion exchanger (TC 2.A.31) family. In terms of processing, N-glycosylated. In terms of tissue distribution, in the brain, detected in cerebral cortex, subcortex, cerebellum, hippocampus and medulla (at protein level). In the cerebrum, expressed at high levels throughout the cortex, at lower levels in striatum and not detectable in the corpus callosum (at protein level). In the cerebellum, detected at high levels in the molecular layer but at very low levels in the granular layer (at protein level). In the central nervous system, detected in neurons in the olfactory bulb, cortex and cerebellum (at protein level). Within the hippocampus, abundantly expressed in CA3 pyramidal cells (at protein level). Strongly expressed in the retina with high levels in bipolar and amacrine cells (at protein level). Expressed in the epithelial cells of the choroid plexus. During embryonic development, expressed in neurons of the central nervous system. Also expressed in the peripheral nervous system and in non-neuronal tissues such as the dura and some epithelia including the acid-secreting epithelium of the stomach and the duodenal epithelium. In the embryonic retina, expression is restricted to the neuronal cell layer and the retinal pigment epithelium. As to expression, expressed at high levels in brain and at low levels in the pituitary, testis, kidney and ileum. Also expressed in pancreatic islets.

It is found in the basolateral cell membrane. The protein localises to the apical cell membrane. Its subcellular location is the cell projection. The protein resides in the dendrite. It localises to the axon. It is found in the perikaryon. The protein localises to the presynapse. Its subcellular location is the postsynapse. It carries out the reaction 2 hydrogencarbonate(out) + chloride(in) + Na(+)(out) = 2 hydrogencarbonate(in) + chloride(out) + Na(+)(in). Zinc-binding negatively regulates its activity. Sodium/bicarbonate cotransporter which plays an important role in regulating intracellular pH. Has been shown to act as a sodium/bicarbonate cotransporter in exchange for intracellular chloride. Has also been shown to act as a sodium/biocarbonate cotransporter which is not responsible for net efflux of chloride, with the observed chloride efflux being due to chloride self-exchange. Controls neuronal pH and may contribute to the secretion of cerebrospinal fluid. Acting on presynaptic intracellular pH, it promotes GABA release, reduces the excitability of CA1 pyramidal neurons, and modulates short-term synaptic plasticity. Required in retinal cells to maintain normal pH which is necessary for normal vision. In the kidney, likely to mediate bicarbonate reclamation in the apical membrane of the proximal tubules. In terms of biological role, sodium/bicarbonate cotransporter which mediates cotransport of sodium and bicarbonate in association with an efflux of intracellular chloride. The chain is Sodium-driven chloride bicarbonate exchanger from Mus musculus (Mouse).